A 72-amino-acid chain; its full sequence is Omega-conotoxin-like SVIA mutant 1 (72 aa).

Positions 1-22 are cleaved as a signal peptide; the sequence is MKLTCVVIVAVLLLTACQLITA. A propeptide spanning residues 23-48 is cleaved from the precursor; that stretch reads EDSRGAQKHRTLRSTARRSKSELTTR. Cystine bridges form between C49/C63, C56/C66, and C62/C71. P55 is modified (4-hydroxyproline).

Belongs to the conotoxin O1 superfamily. As to expression, expressed by the venom duct.

Its subcellular location is the secreted. Functionally, omega-conotoxins act at presynaptic membranes, they bind and block voltage-gated calcium channels (Cav). The protein is Omega-conotoxin-like SVIA mutant 1 of Conus striatus (Striated cone).